The following is a 228-amino-acid chain: Large ribosomal subunit protein uL1 (228 aa).

It belongs to the universal ribosomal protein uL1 family. Part of the 50S ribosomal subunit.

Binds directly to 23S rRNA. The L1 stalk is quite mobile in the ribosome, and is involved in E site tRNA release. In terms of biological role, protein L1 is also a translational repressor protein, it controls the translation of the L11 operon by binding to its mRNA. The sequence is that of Large ribosomal subunit protein uL1 from Clavibacter sepedonicus (Clavibacter michiganensis subsp. sepedonicus).